The sequence spans 262 residues: Endoplasmic reticulum chaperone BiP (262 aa).

8–11 (GSTR) contributes to the ATP binding site. Residues 53–63 (QDTGDLVLLDV) form an interdomain linker region. Positions 64–144 (CPLTLGIETV…PRGVPQIEVT (81 aa)) are substrate-binding (SBD). Position 91 is an N6-succinyllysine (lysine 91). The residue at position 136 (arginine 136) is an Omega-N-methylarginine. O-AMP-threonine; alternate is present on threonine 162. Phosphothreonine; alternate is present on threonine 162. Lysine 229 bears the N6,N6,N6-trimethyllysine; by METTL21A; in vitro mark. Lysine 229 carries the N6,N6-dimethyllysine; alternate modification. Lysine 229 carries the post-translational modification N6-methyllysine; alternate. Position 235 is an N6-methyllysine (lysine 235).

This sequence belongs to the heat shock protein 70 family. As to quaternary structure, monomer and homooligomer; homooligomerization via the interdomain linker inactivates the chaperone activity and acts as a storage of HSPA5/BiP molecules. Interacts with DNAJC1 (via J domain). Component of an EIF2 complex at least composed of CELF1/CUGBP1, CALR, CALR3, EIF2S1, EIF2S2, HSP90B1 and HSPA5. Part of a large chaperone multiprotein complex comprising DNAJB11, HSP90B1, HSPA5, HYOU, PDIA2, PDIA4, PDIA6, PPIB, SDF2L1, UGGT1 and very small amounts of ERP29, but not, or at very low levels, CALR nor CANX. Interacts with TMEM132A and TRIM21. May form a complex with ERLEC1, OS9, SEL1L and SYVN1. Interacts with DNAJC10. Interacts with DNAJB9/ERdj4; leading to recruit HSPA5/BiP to ERN1/IRE1. Interacts with ERN1/IRE1 (via luminal domain); the interaction takes place following interaction with DNAJB9/ERdj4 and leads to inactivate ERN1/IRE1, the interaction also competitively inhibits ERN1 interaction with MANF. Interacts directly with MANF (via SAP domain); the interaction inhibits ATP binding to HSPA5/BiP and subsequent nucleotide exchange. Interacts with EIF2AK3/PERK (via luminal domain); interaction leads to inactivate EIF2AK3/PERK. Interacts with MX1. Interacts with METTL23. Interacts with CEMIP; the interaction induces calcium leakage from the endoplasmic reticulum and cell migration. Interacts with PCSK4 form; the interaction takes place in the endoplasmic reticulum. Interacts with CIPC. Interacts with CCDC88B (via C-terminus); the interaction opposes ERN1-mediated JNK activation, protecting against apoptosis. Interacts with INPP5K; necessary for INPP5K localization at the endoplasmic reticulum. Interacts with MANF; the interaction is direct. Interacts with LOXL2; leading to activate the ERN1/IRE1-XBP1 pathway of the unfolded protein response. Interacts with CLU under stressed condition; interaction increases CLU protein stability; facilitates its retrotranslocation and redistribution to the mitochondria; cooperatively suppress stress-induced apoptosis by stabilizing mitochondrial membrane integrity. Interacts with CCDC47. Interacts with CLN3. Interacts with ELAPOR1; may regulate the function of HSPA5 in apoptosis and cell proliferation. Interacts with CASP7. Interacts with ILDR2; the interaction stabilizes ILDR2 expression. Interacts with ADAM7. In unstressed cells, AMPylation at Thr-162 by FICD inactivates the chaperome activity: AMPylated form is locked in a relatively inert state and only weakly stimulated by J domain-containing proteins. In response to endoplasmic reticulum stress, de-AMPylation by the same protein, FICD, restores the chaperone activity.

It is found in the endoplasmic reticulum lumen. The protein localises to the melanosome. Its subcellular location is the cytoplasm. The protein resides in the cell surface. The enzyme catalyses ATP + H2O = ADP + phosphate + H(+). With respect to regulation, the chaperone activity is regulated by ATP-induced allosteric coupling of the nucleotide-binding (NBD) and substrate-binding (SBD) domains. In the ADP-bound and nucleotide-free (apo) states, the two domains have little interaction. In contrast, in the ATP-bound state the two domains are tightly coupled, which results in drastically accelerated kinetics in both binding and release of polypeptide substrates. J domain-containing co-chaperones (DNAJB9/ERdj4 or DNAJC10/ERdj5) stimulate the ATPase activity and are required for efficient substrate recognition by HSPA5/BiP. Homooligomerization inactivates participating HSPA5/BiP protomers and probably act as reservoirs to store HSPA5/BiP molecules when they are not needed by the cell. In terms of biological role, endoplasmic reticulum chaperone that plays a key role in protein folding and quality control in the endoplasmic reticulum lumen. Involved in the correct folding of proteins and degradation of misfolded proteins via its interaction with DNAJC10/ERdj5, probably to facilitate the release of DNAJC10/ERdj5 from its substrate. Acts as a key repressor of the EIF2AK3/PERK and ERN1/IRE1-mediated unfolded protein response (UPR). In the unstressed endoplasmic reticulum, recruited by DNAJB9/ERdj4 to the luminal region of ERN1/IRE1, leading to disrupt the dimerization of ERN1/IRE1, thereby inactivating ERN1/IRE1. Also binds and inactivates EIF2AK3/PERK in unstressed cells. Accumulation of misfolded protein in the endoplasmic reticulum causes release of HSPA5/BiP from ERN1/IRE1 and EIF2AK3/PERK, allowing their homodimerization and subsequent activation. Plays an auxiliary role in post-translational transport of small presecretory proteins across endoplasmic reticulum (ER). May function as an allosteric modulator for SEC61 channel-forming translocon complex, likely cooperating with SEC62 to enable the productive insertion of these precursors into SEC61 channel. Appears to specifically regulate translocation of precursors having inhibitory residues in their mature region that weaken channel gating. May also play a role in apoptosis and cell proliferation. This chain is Endoplasmic reticulum chaperone BiP, found in Sus scrofa (Pig).